Here is a 328-residue protein sequence, read N- to C-terminus: Tetraacyldisaccharide 4'-kinase (328 aa).

Position 55–62 (55–62 (TAGGNGKT)) interacts with ATP.

The protein belongs to the LpxK family.

It catalyses the reaction a lipid A disaccharide + ATP = a lipid IVA + ADP + H(+). Its pathway is glycolipid biosynthesis; lipid IV(A) biosynthesis; lipid IV(A) from (3R)-3-hydroxytetradecanoyl-[acyl-carrier-protein] and UDP-N-acetyl-alpha-D-glucosamine: step 6/6. Transfers the gamma-phosphate of ATP to the 4'-position of a tetraacyldisaccharide 1-phosphate intermediate (termed DS-1-P) to form tetraacyldisaccharide 1,4'-bis-phosphate (lipid IVA). This chain is Tetraacyldisaccharide 4'-kinase, found in Escherichia coli (strain 55989 / EAEC).